Consider the following 120-residue polypeptide: ATP-dependent Clp protease adapter protein ClpS (120 aa).

Residues methionine 1–alanine 27 form a disordered region.

Belongs to the ClpS family. In terms of assembly, binds to the N-terminal domain of the chaperone ClpA.

In terms of biological role, involved in the modulation of the specificity of the ClpAP-mediated ATP-dependent protein degradation. This chain is ATP-dependent Clp protease adapter protein ClpS, found in Pseudomonas putida (strain GB-1).